The chain runs to 348 residues: VIP36-like protein (348 aa).

The N-terminal stretch at 1–38 is a signal peptide; it reads MAVALGPSGWWQRWRRRLSAREVSRMLLLLLLLGSGQG. Residues 39 to 313 are Lumenal-facing; that stretch reads PRQVGAGQTF…APLPPLSGLA (275 aa). The L-type lectin-like domain occupies 49–274; it reads EYLKREHSLS…DVISLKLFEL (226 aa). The a carbohydrate site is built by serine 93 and aspartate 128. Residues aspartate 159, tyrosine 161, and asparagine 163 each contribute to the Ca(2+) site. A carbohydrate-binding residues include tyrosine 161 and asparagine 163. N-linked (GlcNAc...) asparagine glycosylation occurs at asparagine 181. Histidine 188 is a binding site for a carbohydrate. Residue aspartate 191 participates in Ca(2+) binding. Cysteine 200 and cysteine 237 are disulfide-bonded. 258 to 260 contributes to the a carbohydrate binding site; that stretch reads GDL. Residues 314–334 form a helical membrane-spanning segment; the sequence is LFLIVFFSLVFSVFAIVIGII. The Cytoplasmic portion of the chain corresponds to 335 to 348; the sequence is LYNKWQDQSRKRFY. Positions 344-346 match the Endoplasmic reticulum retention signal motif; sequence RKR.

The protein localises to the endoplasmic reticulum membrane. It localises to the golgi apparatus membrane. In terms of biological role, may be involved in the regulation of export from the endoplasmic reticulum of a subset of glycoproteins. May function as a regulator of ERGIC-53. In Bos taurus (Bovine), this protein is VIP36-like protein (LMAN2L).